The following is a 1304-amino-acid chain: Neuronal cell adhesion molecule (1304 aa).

The first 24 residues, 1–24, serve as a signal peptide directing secretion; the sequence is MQLKIMPKKKRLSAGRVPLILFLC. The Extracellular portion of the chain corresponds to 25–1167; that stretch reads QMISALEVPL…ASRQVDIATQ (1143 aa). Ig-like domains follow at residues 46-134 and 141-235; these read PTIT…AAVS and PSRS…QPIS. Disulfide bonds link Cys-68–Cys-123 and Cys-167–Cys-218. Asn-83 carries N-linked (GlcNAc...) asparagine glycosylation. N-linked (GlcNAc...) asparagine glycans are attached at residues Asn-223, Asn-245, Asn-251, Asn-276, and Asn-314. 4 consecutive Ig-like domains span residues 267 to 356, 361 to 448, 454 to 541, and 545 to 632; these read PPTF…ISVR, PYWI…AFVN, PRIL…VHLE, and PTWI…AVLS. Cystine bridges form between Cys-292/Cys-340 and Cys-382/Cys-432. Residues Asn-433 and Asn-507 are each glycosylated (N-linked (GlcNAc...) asparagine). Disulfide bonds link Cys-476-Cys-525 and Cys-567-Cys-616. N-linked (GlcNAc...) asparagine glycans are attached at residues Asn-619, Asn-716, and Asn-802. Fibronectin type-III domains lie at 649-744, 746-843, 848-950, 954-1051, and 1064-1156; these read PPFD…TKAS, PDKN…SGED, APGN…TPEG, APSS…VDEA, and QAVN…TGPA. N-linked (GlcNAc...) (complex) asparagine glycosylation occurs at Asn-858. 6 N-linked (GlcNAc...) asparagine glycosylation sites follow: Asn-993, Asn-1009, Asn-1019, Asn-1072, Asn-1083, and Asn-1115. The chain crosses the membrane as a helical span at residues 1168-1190; the sequence is GWFIGLMCAVALLILILLIVCFI. At 1191-1304 the chain is on the cytoplasmic side; that stretch reads RRNKGGKYPV…SPVNAMNSFV (114 aa). Over residues 1199–1219 the composition is skewed to basic and acidic residues; the sequence is PVKEKEDAHADPEIQPMKEDD. Positions 1199 to 1304 are disordered; it reads PVKEKEDAHA…SPVNAMNSFV (106 aa). Residue Thr-1221 is modified to Phosphothreonine. The residue at position 1225 (Tyr-1225) is a Phosphotyrosine. A Phosphoserine modification is found at Ser-1226. Over residues 1241–1250 the composition is skewed to basic and acidic residues; the sequence is PSDRTVKKED. Residues Ser-1251, Ser-1254, Ser-1271, Ser-1290, Ser-1291, and Ser-1295 each carry the phosphoserine modification. The span at 1288–1304 shows a compositional bias: polar residues; that stretch reads NESSEAPSPVNAMNSFV.

This sequence belongs to the immunoglobulin superfamily. L1/neurofascin/NgCAM family. Constituent of a NFASC/NRCAM/ankyrin-G complex. Detected in a complex with CNTN1 and PTPRB. Interacts with GLDN/gliomedin. Interacts with MYOC. As to expression, detected in all the examined tissues. In the brain it was detected in the amygdala, caudate nucleus, corpus callosum, hippocampus, hypothalamus, substantia nigra, subthalamic nucleus and thalamus.

Its subcellular location is the cell membrane. It localises to the cell projection. The protein resides in the axon. It is found in the secreted. In terms of biological role, cell adhesion protein that is required for normal responses to cell-cell contacts in brain and in the peripheral nervous system. Plays a role in neurite outgrowth in response to contactin binding. Plays a role in mediating cell-cell contacts between Schwann cells and axons. Plays a role in the formation and maintenance of the nodes of Ranvier on myelinated axons. Nodes of Ranvier contain clustered sodium channels that are crucial for the saltatory propagation of action potentials along myelinated axons. During development, nodes of Ranvier are formed by the fusion of two heminodes. Required for normal clustering of sodium channels at heminodes; not required for the formation of mature nodes with normal sodium channel clusters. Required, together with GLDN, for maintaining NFASC and sodium channel clusters at mature nodes of Ranvier. The chain is Neuronal cell adhesion molecule (NRCAM) from Homo sapiens (Human).